The sequence spans 128 residues: Large ribosomal subunit protein bL12 (128 aa).

The protein belongs to the bacterial ribosomal protein bL12 family. In terms of assembly, homodimer. Part of the ribosomal stalk of the 50S ribosomal subunit. Forms a multimeric L10(L12)X complex, where L10 forms an elongated spine to which 2 to 4 L12 dimers bind in a sequential fashion. Binds GTP-bound translation factors.

Forms part of the ribosomal stalk which helps the ribosome interact with GTP-bound translation factors. Is thus essential for accurate translation. The polypeptide is Large ribosomal subunit protein bL12 (Saccharopolyspora erythraea (strain ATCC 11635 / DSM 40517 / JCM 4748 / NBRC 13426 / NCIMB 8594 / NRRL 2338)).